Consider the following 788-residue polypeptide: Glycerol-3-phosphate acyltransferase (788 aa).

The segment at 104–135 (LLPGRDPYHPNPRQQRRILRSDPQRARVMAGE) is disordered. The HXXXXD motif signature appears at 271 to 276 (SHRSYI).

Belongs to the GPAT/DAPAT family.

It is found in the cell membrane. It catalyses the reaction sn-glycerol 3-phosphate + an acyl-CoA = a 1-acyl-sn-glycero-3-phosphate + CoA. Its pathway is phospholipid metabolism; CDP-diacylglycerol biosynthesis; CDP-diacylglycerol from sn-glycerol 3-phosphate: step 1/3. This chain is Glycerol-3-phosphate acyltransferase, found in Mycobacterium marinum (strain ATCC BAA-535 / M).